The chain runs to 687 residues: uncharacterized protein (687 aa).

14 consecutive transmembrane segments (helical) span residues 28–48 (IIFT…TIVV), 66–86 (WAVT…GKLG), 94–114 (VLLG…LSQT), 126–146 (GVGA…VVPL), 154–174 (GVLG…GGWL), 182–202 (WAFW…ATAV), 211–231 (PVID…LIMA), 243–263 (SATI…FVWL), 287–307 (VLSF…PIYL), 320–340 (LRTL…GVLV), 348–368 (IFPV…SQMD), 378–398 (LYLV…VLIV), 414–434 (VTFF…ALFV), and 480–500 (LTQV…LALL).

The protein belongs to the major facilitator superfamily. TCR/Tet family.

Its subcellular location is the cell membrane. This is an uncharacterized protein from Mycobacterium tuberculosis (strain CDC 1551 / Oshkosh).